The primary structure comprises 844 residues: Translation elongation factor 2 (844 aa).

The tr-type G domain maps to 17 to 348; that stretch reads RNIRNMSVIA…MIAIHLPSPV (332 aa). Residue 26-33 participates in GTP binding; it reads AHVDHGKS. Phosphothreonine is present on residues Thr57 and Thr59. GTP is bound by residues 162 to 165 and 219 to 221; these read NKMD and SGL. Ser488 is subject to Phosphoserine. Residue His701 is modified to Diphthamide.

It belongs to the TRAFAC class translation factor GTPase superfamily. Classic translation factor GTPase family. EF-G/EF-2 subfamily. In terms of processing, phosphorylation by EF-2 kinase completely inactivates EF-2.

It localises to the cytoplasm. It carries out the reaction GTP + H2O = GDP + phosphate + H(+). Catalyzes the GTP-dependent ribosomal translocation step during translation elongation. During this step, the ribosome changes from the pre-translocational (PRE) to the post-translocational (POST) state as the newly formed A-site-bound peptidyl-tRNA and P-site-bound deacylated tRNA move to the P and E sites, respectively. Catalyzes the coordinated movement of the two tRNA molecules, the mRNA and conformational changes in the ribosome. This chain is Translation elongation factor 2, found in Bombyx mori (Silk moth).